The sequence spans 339 residues: Anthranilate phosphoribosyltransferase (339 aa).

Residues Gly-78, 81–82 (GD), Thr-86, 88–91 (NAST), 106–114 (KHGNRSVTS), and Ser-118 contribute to the 5-phospho-alpha-D-ribose 1-diphosphate site. Gly-78 is a binding site for anthranilate. Ser-90 is a Mg(2+) binding site. Asn-109 provides a ligand contact to anthranilate. Arg-164 contacts anthranilate. Asp-225 and Glu-226 together coordinate Mg(2+). Residues 248–265 (TVAPEDVGLDRADPKDVA) show a composition bias toward basic and acidic residues. Positions 248–271 (TVAPEDVGLDRADPKDVAGADPET) are disordered.

This sequence belongs to the anthranilate phosphoribosyltransferase family. As to quaternary structure, homodimer. It depends on Mg(2+) as a cofactor.

The catalysed reaction is N-(5-phospho-beta-D-ribosyl)anthranilate + diphosphate = 5-phospho-alpha-D-ribose 1-diphosphate + anthranilate. The protein operates within amino-acid biosynthesis; L-tryptophan biosynthesis; L-tryptophan from chorismate: step 2/5. In terms of biological role, catalyzes the transfer of the phosphoribosyl group of 5-phosphorylribose-1-pyrophosphate (PRPP) to anthranilate to yield N-(5'-phosphoribosyl)-anthranilate (PRA). The protein is Anthranilate phosphoribosyltransferase of Methanopyrus kandleri (strain AV19 / DSM 6324 / JCM 9639 / NBRC 100938).